The following is a 164-amino-acid chain: Choriogonadotropin subunit beta (164 aa).

The N-terminal stretch at 1–20 (MEMLQGLLLCLLLSTGGAWA) is a signal peptide. 6 disulfide bridges follow: Cys29-Cys77, Cys43-Cys92, Cys46-Cys130, Cys54-Cys108, Cys58-Cys110, and Cys113-Cys120. Asn50 is a glycosylation site (N-linked (GlcNAc...) asparagine). The disordered stretch occupies residues 133-164 (HTSQDSSSKDPPRNLTSPSQLPEPADAPLVPQ). A glycan (O-linked (GalNAc...) serine) is linked at Ser140. An N-linked (GlcNAc...) asparagine glycan is attached at Asn146. O-linked (GalNAc...) serine glycosylation occurs at Ser151.

The protein belongs to the glycoprotein hormones subunit beta family. In terms of assembly, heterodimer of a common alpha chain and a unique beta chain which confers biological specificity to thyrotropin, lutropin, follitropin and gonadotropin.

The protein localises to the secreted. Functionally, stimulates the ovaries to synthesize the steroids that are essential for the maintenance of pregnancy. The polypeptide is Choriogonadotropin subunit beta (CGB) (Aotus nancymaae (Ma's night monkey)).